The chain runs to 123 residues: uncharacterized protein (123 aa).

This is an uncharacterized protein from Human cytomegalovirus (strain AD169) (HHV-5).